Consider the following 71-residue polypeptide: Large ribosomal subunit protein eL38 (71 aa).

This sequence belongs to the eukaryotic ribosomal protein eL38 family.

This Argas monolakensis (Mono lake bird tick) protein is Large ribosomal subunit protein eL38 (RpL38).